A 201-amino-acid chain; its full sequence is UPF0301 protein Atu0781 (201 aa).

Belongs to the UPF0301 (AlgH) family.

The polypeptide is UPF0301 protein Atu0781 (Agrobacterium fabrum (strain C58 / ATCC 33970) (Agrobacterium tumefaciens (strain C58))).